The sequence spans 354 residues: Holliday junction branch migration complex subunit RuvB (354 aa).

The large ATPase domain (RuvB-L) stretch occupies residues 1–183; it reads MTGDNLVSAY…FGFVAHLDFY (183 aa). Residues Arg-23, Gly-64, Lys-67, Thr-68, Ser-69, 130 to 132, Arg-173, Tyr-183, and Arg-220 each bind ATP; that span reads EDF. Position 68 (Thr-68) interacts with Mg(2+). The tract at residues 184-254 is small ATPAse domain (RuvB-S); that stretch reads SPADLETLLN…TAQAALTVYD (71 aa). Residues 257–354 are head domain (RuvB-H); it reads ALGLDRLDRA…DLFSVEPDQP (98 aa). Positions 312 and 317 each coordinate DNA.

This sequence belongs to the RuvB family. In terms of assembly, homohexamer. Forms an RuvA(8)-RuvB(12)-Holliday junction (HJ) complex. HJ DNA is sandwiched between 2 RuvA tetramers; dsDNA enters through RuvA and exits via RuvB. An RuvB hexamer assembles on each DNA strand where it exits the tetramer. Each RuvB hexamer is contacted by two RuvA subunits (via domain III) on 2 adjacent RuvB subunits; this complex drives branch migration. In the full resolvosome a probable DNA-RuvA(4)-RuvB(12)-RuvC(2) complex forms which resolves the HJ.

It is found in the cytoplasm. It catalyses the reaction ATP + H2O = ADP + phosphate + H(+). The RuvA-RuvB-RuvC complex processes Holliday junction (HJ) DNA during genetic recombination and DNA repair, while the RuvA-RuvB complex plays an important role in the rescue of blocked DNA replication forks via replication fork reversal (RFR). RuvA specifically binds to HJ cruciform DNA, conferring on it an open structure. The RuvB hexamer acts as an ATP-dependent pump, pulling dsDNA into and through the RuvAB complex. RuvB forms 2 homohexamers on either side of HJ DNA bound by 1 or 2 RuvA tetramers; 4 subunits per hexamer contact DNA at a time. Coordinated motions by a converter formed by DNA-disengaged RuvB subunits stimulates ATP hydrolysis and nucleotide exchange. Immobilization of the converter enables RuvB to convert the ATP-contained energy into a lever motion, pulling 2 nucleotides of DNA out of the RuvA tetramer per ATP hydrolyzed, thus driving DNA branch migration. The RuvB motors rotate together with the DNA substrate, which together with the progressing nucleotide cycle form the mechanistic basis for DNA recombination by continuous HJ branch migration. Branch migration allows RuvC to scan DNA until it finds its consensus sequence, where it cleaves and resolves cruciform DNA. This Salinispora tropica (strain ATCC BAA-916 / DSM 44818 / JCM 13857 / NBRC 105044 / CNB-440) protein is Holliday junction branch migration complex subunit RuvB.